The primary structure comprises 378 residues: Biotin synthase (378 aa).

The 225-residue stretch at 68–292 (NEVQISTLLS…IAVTRICCPS (225 aa)) folds into the Radical SAM core domain. [4Fe-4S] cluster is bound by residues Cys-83, Cys-87, and Cys-90. Residues Cys-129, Cys-160, Cys-220, and Arg-296 each coordinate [2Fe-2S] cluster.

This sequence belongs to the radical SAM superfamily. Biotin synthase family. As to quaternary structure, homodimer. It depends on [4Fe-4S] cluster as a cofactor. Requires [2Fe-2S] cluster as cofactor.

The catalysed reaction is (4R,5S)-dethiobiotin + (sulfur carrier)-SH + 2 reduced [2Fe-2S]-[ferredoxin] + 2 S-adenosyl-L-methionine = (sulfur carrier)-H + biotin + 2 5'-deoxyadenosine + 2 L-methionine + 2 oxidized [2Fe-2S]-[ferredoxin]. Its pathway is cofactor biosynthesis; biotin biosynthesis; biotin from 7,8-diaminononanoate: step 2/2. Its function is as follows. Catalyzes the conversion of dethiobiotin (DTB) to biotin by the insertion of a sulfur atom into dethiobiotin via a radical-based mechanism. In Psychrobacter arcticus (strain DSM 17307 / VKM B-2377 / 273-4), this protein is Biotin synthase.